The primary structure comprises 142 residues: Large ribosomal subunit protein uL13 (142 aa).

The protein belongs to the universal ribosomal protein uL13 family. Part of the 50S ribosomal subunit.

This protein is one of the early assembly proteins of the 50S ribosomal subunit, although it is not seen to bind rRNA by itself. It is important during the early stages of 50S assembly. The chain is Large ribosomal subunit protein uL13 from Acidithiobacillus ferrooxidans (strain ATCC 23270 / DSM 14882 / CIP 104768 / NCIMB 8455) (Ferrobacillus ferrooxidans (strain ATCC 23270)).